The chain runs to 163 residues: Putative pre-16S rRNA nuclease (163 aa).

Belongs to the YqgF nuclease family.

The protein resides in the cytoplasm. In terms of biological role, could be a nuclease involved in processing of the 5'-end of pre-16S rRNA. This is Putative pre-16S rRNA nuclease from Rhizobium leguminosarum bv. trifolii (strain WSM2304).